Reading from the N-terminus, the 206-residue chain is Glycerol-3-phosphate acyltransferase (206 aa).

Transmembrane regions (helical) follow at residues Ile14–Leu34, Ala67–Leu87, Ala91–Phe111, Leu124–Val144, and Tyr148–Gly168.

This sequence belongs to the PlsY family. As to quaternary structure, probably interacts with PlsX.

It is found in the cell inner membrane. The catalysed reaction is an acyl phosphate + sn-glycerol 3-phosphate = a 1-acyl-sn-glycero-3-phosphate + phosphate. It functions in the pathway lipid metabolism; phospholipid metabolism. Catalyzes the transfer of an acyl group from acyl-phosphate (acyl-PO(4)) to glycerol-3-phosphate (G3P) to form lysophosphatidic acid (LPA). This enzyme utilizes acyl-phosphate as fatty acyl donor, but not acyl-CoA or acyl-ACP. This is Glycerol-3-phosphate acyltransferase from Rhizobium etli (strain ATCC 51251 / DSM 11541 / JCM 21823 / NBRC 15573 / CFN 42).